The chain runs to 374 residues: UDP-N-acetylglucosamine--N-acetylmuramyl-(pentapeptide) pyrophosphoryl-undecaprenol N-acetylglucosamine transferase (374 aa).

UDP-N-acetyl-alpha-D-glucosamine is bound by residues 13-15, Asn124, Arg165, Ser193, and Gln294; that span reads TGG.

The protein belongs to the glycosyltransferase 28 family. MurG subfamily.

Its subcellular location is the cell inner membrane. It carries out the reaction di-trans,octa-cis-undecaprenyl diphospho-N-acetyl-alpha-D-muramoyl-L-alanyl-D-glutamyl-meso-2,6-diaminopimeloyl-D-alanyl-D-alanine + UDP-N-acetyl-alpha-D-glucosamine = di-trans,octa-cis-undecaprenyl diphospho-[N-acetyl-alpha-D-glucosaminyl-(1-&gt;4)]-N-acetyl-alpha-D-muramoyl-L-alanyl-D-glutamyl-meso-2,6-diaminopimeloyl-D-alanyl-D-alanine + UDP + H(+). It participates in cell wall biogenesis; peptidoglycan biosynthesis. Functionally, cell wall formation. Catalyzes the transfer of a GlcNAc subunit on undecaprenyl-pyrophosphoryl-MurNAc-pentapeptide (lipid intermediate I) to form undecaprenyl-pyrophosphoryl-MurNAc-(pentapeptide)GlcNAc (lipid intermediate II). This Sinorhizobium medicae (strain WSM419) (Ensifer medicae) protein is UDP-N-acetylglucosamine--N-acetylmuramyl-(pentapeptide) pyrophosphoryl-undecaprenol N-acetylglucosamine transferase.